The primary structure comprises 83 residues: Small ribosomal subunit protein bS20 (83 aa).

The segment at 1-21 (MPNIKSAIKRVRTTETAEERN) is disordered. Residues 12–21 (RTTETAEERN) are compositionally biased toward basic and acidic residues.

This sequence belongs to the bacterial ribosomal protein bS20 family.

Functionally, binds directly to 16S ribosomal RNA. This is Small ribosomal subunit protein bS20 from Staphylococcus epidermidis (strain ATCC 35984 / DSM 28319 / BCRC 17069 / CCUG 31568 / BM 3577 / RP62A).